Reading from the N-terminus, the 1063-residue chain is NAD-specific glutamate dehydrogenase (1063 aa).

It belongs to the Glu/Leu/Phe/Val dehydrogenases family. Highly divergent. In terms of assembly, homotetramer.

It catalyses the reaction L-glutamate + NAD(+) + H2O = 2-oxoglutarate + NH4(+) + NADH + H(+). With respect to regulation, allosterically activated by NADP(+). The chain is NAD-specific glutamate dehydrogenase from Achlya klebsiana.